A 628-amino-acid polypeptide reads, in one-letter code: 1-deoxy-D-xylulose-5-phosphate synthase (628 aa).

Residues His72 and 113–115 each bind thiamine diphosphate; that span reads GHS. Mg(2+) is bound at residue Asp144. Residues 145–146, Asn173, Tyr284, and Glu366 each bind thiamine diphosphate; that span reads GA. A Mg(2+)-binding site is contributed by Asn173.

It belongs to the transketolase family. DXPS subfamily. As to quaternary structure, homodimer. Mg(2+) serves as cofactor. Thiamine diphosphate is required as a cofactor.

The enzyme catalyses D-glyceraldehyde 3-phosphate + pyruvate + H(+) = 1-deoxy-D-xylulose 5-phosphate + CO2. It functions in the pathway metabolic intermediate biosynthesis; 1-deoxy-D-xylulose 5-phosphate biosynthesis; 1-deoxy-D-xylulose 5-phosphate from D-glyceraldehyde 3-phosphate and pyruvate: step 1/1. Functionally, catalyzes the acyloin condensation reaction between C atoms 2 and 3 of pyruvate and glyceraldehyde 3-phosphate to yield 1-deoxy-D-xylulose-5-phosphate (DXP). This Shouchella clausii (strain KSM-K16) (Alkalihalobacillus clausii) protein is 1-deoxy-D-xylulose-5-phosphate synthase.